Consider the following 379-residue polypeptide: Protein RecA (379 aa).

A compositionally biased stretch (low complexity) spans 1–14 (MSNEIKSISSSNSS). The interval 1–24 (MSNEIKSISSSNSSCPPNEARSGE) is disordered. 84 to 91 (GPESSGKT) is an ATP binding site.

The protein belongs to the RecA family.

The protein localises to the cytoplasm. Its function is as follows. Can catalyze the hydrolysis of ATP in the presence of single-stranded DNA, the ATP-dependent uptake of single-stranded DNA by duplex DNA, and the ATP-dependent hybridization of homologous single-stranded DNAs. It interacts with LexA causing its activation and leading to its autocatalytic cleavage. This Prochlorococcus marinus (strain SARG / CCMP1375 / SS120) protein is Protein RecA.